We begin with the raw amino-acid sequence, 99 residues long: Small ribosomal subunit protein uS14m (99 aa).

This sequence belongs to the universal ribosomal protein uS14 family.

It localises to the mitochondrion. The protein is Small ribosomal subunit protein uS14m (RPS14) of Acanthamoeba castellanii (Amoeba).